We begin with the raw amino-acid sequence, 351 residues long: Spermidine/putrescine import ATP-binding protein PotA (351 aa).

The ABC transporter domain maps to 6-236; sequence LELRNVTKEY…PENAWVANFI (231 aa). An ATP-binding site is contributed by 38–45; it reads GPSGCGKT.

Belongs to the ABC transporter superfamily. Spermidine/putrescine importer (TC 3.A.1.11.1) family. The complex is composed of two ATP-binding proteins (PotA), two transmembrane proteins (PotB and PotC) and a solute-binding protein (PotD).

It is found in the cell membrane. It catalyses the reaction ATP + H2O + polyamine-[polyamine-binding protein]Side 1 = ADP + phosphate + polyamineSide 2 + [polyamine-binding protein]Side 1.. Part of the ABC transporter complex PotABCD involved in spermidine/putrescine import. Responsible for energy coupling to the transport system. The chain is Spermidine/putrescine import ATP-binding protein PotA from Mycoplasma capricolum subsp. capricolum (strain California kid / ATCC 27343 / NCTC 10154).